A 637-amino-acid polypeptide reads, in one-letter code: GTPase-activating protein GYP1 (637 aa).

The segment covering 1-17 (MGVRSAAKEMHERDHNS) has biased composition (basic and acidic residues). 2 disordered regions span residues 1–152 (MGVR…GDRY) and 187–233 (RTLS…NDSK). Over residues 18 to 27 (DSSSLVTSLM) the composition is skewed to polar residues. The segment covering 28 to 45 (KSWRISSASSSKKPSLYK) has biased composition (low complexity). The segment covering 46 to 59 (MNTTESTSLPSGYA) has biased composition (polar residues). Ser-69 is subject to Phosphoserine. Polar residues-rich tracts occupy residues 79–91 (QQAS…NSYS) and 98–107 (PTLSTASNES). Over residues 115–127 (RQHHQRHHHHQQP) the composition is skewed to basic residues. Composition is skewed to low complexity over residues 128–142 (RHSS…CSNS) and 187–207 (RTLS…MGTS). Polar residues predominate over residues 208 to 223 (AVRNSSSSFTYPQLPQ). Phosphoserine is present on Ser-250. In terms of domain architecture, Rab-GAP TBC spans 280–508 (GIPKIHRPVV…RMWDTYLSET (229 aa)). The disordered stretch occupies residues 543–564 (DFQSPTTALSNMTPNNAVEDSG).

Its subcellular location is the golgi apparatus. The protein resides in the golgi stack. GTPase-activating protein (GAP) that stimulates specifically the intrinsic GTPase activity of Ypt/Rab-type GTPases YPT1 and YPT7. Functions on the Golgi as a negative regulator of YPT1. Functions on the vacuole as a negative regulator of YPT7. It is also active on SEC4 and YPT51. Provides a catalytic arginine (arginine finger) and glutamine (glutamine finger) in trans to accelerate the GTP hydrolysis rate of the substrate GTPase. This Saccharomyces cerevisiae (strain ATCC 204508 / S288c) (Baker's yeast) protein is GTPase-activating protein GYP1 (GYP1).